The following is a 299-amino-acid chain: UDP-N-acetylenolpyruvoylglucosamine reductase (299 aa).

The FAD-binding PCMH-type domain occupies 26–191; the sequence is GIGGPAKYFV…VSATFQLNAS (166 aa). Residue Arg-170 is part of the active site. Cys-218 (proton donor) is an active-site residue. Residue Glu-288 is part of the active site.

The protein belongs to the MurB family. It depends on FAD as a cofactor.

It localises to the cytoplasm. It carries out the reaction UDP-N-acetyl-alpha-D-muramate + NADP(+) = UDP-N-acetyl-3-O-(1-carboxyvinyl)-alpha-D-glucosamine + NADPH + H(+). It functions in the pathway cell wall biogenesis; peptidoglycan biosynthesis. Its function is as follows. Cell wall formation. In Protochlamydia amoebophila (strain UWE25), this protein is UDP-N-acetylenolpyruvoylglucosamine reductase.